The chain runs to 353 residues: MTACSTTPTTSATSAQPAAGSPLQWHARPSKSDTLPFEGAWSVQAIQELLDKPFMDLMFQAQSVHREHWPAGDIELATLLSVKTGGCPENCGYCPQAAEFDTGVKAEKLMSVDEVTRAAQAAKDAGATRFCMGAAWRAPKDRDIEKMNELIGAVKGLGMQTCATLGMLQPHQAQSLREAGLDYYNHNLDTAPEYYQDVVSTRQYQDRLDTLKAVRGAGISVCCGGIIGMGEAPVHRAGLIAQLANLNPHPESVPINSLVRVPGTPLADSEPVDPLDFVRVIAVARITMPTARVRLSAGRQQLGDAVQALCFMAGANSIFYGDKLLVTGNPDVEADTTLLRKLGLSGTRTSVQE.

Residues 1 to 22 (MTACSTTPTTSATSAQPAAGSP) are compositionally biased toward low complexity. A disordered region spans residues 1-30 (MTACSTTPTTSATSAQPAAGSPLQWHARPS). The 228-residue stretch at 72–299 (GDIELATLLS…TARVRLSAGR (228 aa)) folds into the Radical SAM core domain. Residues Cys87, Cys91, and Cys94 each contribute to the [4Fe-4S] cluster site. 4 residues coordinate [2Fe-2S] cluster: Cys131, Cys162, Cys222, and Arg294.

Belongs to the radical SAM superfamily. Biotin synthase family. As to quaternary structure, homodimer. The cofactor is [4Fe-4S] cluster. Requires [2Fe-2S] cluster as cofactor.

The catalysed reaction is (4R,5S)-dethiobiotin + (sulfur carrier)-SH + 2 reduced [2Fe-2S]-[ferredoxin] + 2 S-adenosyl-L-methionine = (sulfur carrier)-H + biotin + 2 5'-deoxyadenosine + 2 L-methionine + 2 oxidized [2Fe-2S]-[ferredoxin]. The protein operates within cofactor biosynthesis; biotin biosynthesis; biotin from 7,8-diaminononanoate: step 2/2. Its function is as follows. Catalyzes the conversion of dethiobiotin (DTB) to biotin by the insertion of a sulfur atom into dethiobiotin via a radical-based mechanism. The protein is Biotin synthase of Delftia acidovorans (strain DSM 14801 / SPH-1).